Consider the following 316-residue polypeptide: Very-long-chain 3-oxooacyl-coA reductase let-767 (316 aa).

NADP(+) contacts are provided by residues 47–76 (ASWAVVTGATDGIGKAYAFELARRGFNVLL) and Asp106. Position 189 (Ser189) interacts with substrate. Tyr202 acts as the Proton acceptor in catalysis. Lys206 provides a ligand contact to NADP(+).

It belongs to the short-chain dehydrogenases/reductases (SDR) family. 17-beta-HSD 3 subfamily. In terms of tissue distribution, expressed in the gut of larva and adult.

It catalyses the reaction a very-long-chain (3R)-3-hydroxyacyl-CoA + NADP(+) = a very-long-chain 3-oxoacyl-CoA + NADPH + H(+). It carries out the reaction (omega-1)-methyl-(3R)-hydroxy-fatty acyl-CoA + NADP(+) = (omega-1)-methyl-3-oxo-fatty acyl-CoA + NADPH + H(+). The enzyme catalyses a 17beta-hydroxy steroid + NADP(+) = a 17-oxo steroid + NADPH + H(+). The protein operates within lipid metabolism; fatty acid biosynthesis. Its function is as follows. Required for branched-chain fatty acid synthesis (such as (omega-1)-methyl-fatty acids). Catalyzes the reduction of the 3-keto-fatty acyl-CoA intermediate that is formed in each cycle of fatty acid elongation. Very long-chain fatty acids (VLCFAs) serve as precursors for ceramide and sphingolipids. Involved in hormone production as it metabolizes 4-androstendione (androst-4-ene-3,17-dione) into testosterone and estrone into estradiol (17beta-estradiol) in vitro, but the physiological steroid substrate is unknown. This chain is Very-long-chain 3-oxooacyl-coA reductase let-767 (let-767), found in Caenorhabditis elegans.